Reading from the N-terminus, the 66-residue chain is Phylloseptin-S2 (66 aa).

A signal peptide spans 1 to 22; it reads MAFLKKSLFLVLFLGLVSLSIC. Residues 23-46 constitute a propeptide that is removed on maturation; it reads EEEKRETEEEEHDQEEDDKSEEKR. The tract at residues 25-44 is disordered; it reads EKRETEEEEHDQEEDDKSEE. Over residues 30–41 the composition is skewed to acidic residues; sequence EEEEHDQEEDDK. Phenylalanine amide is present on F65.

Expressed by the skin glands.

It localises to the secreted. Its subcellular location is the target cell membrane. Functionally, antimicrobial peptide with high activity against Gram-positive bacteria, moderate activity against Gram-negative bacteria, and moderate activity against fungi. Acts by causing bacterial membrane disruption inducing leakage of the intracellular content followed by cell death. It adopts an alpha-helical amphipathic structure in membrane environments. Also shows highly potent antiparasitic activity against Leishmania species. Shows moderate hemolytic activity on human erythrocytes (LC(50)=25 uM). Is also active on human monocytes (IC(50)=22.5 uM). This is Phylloseptin-S2 from Phyllomedusa sauvagei (Sauvage's leaf frog).